A 351-amino-acid chain; its full sequence is Probable NADP-dependent isopropanol dehydrogenase (351 aa).

Residues cysteine 37, histidine 59, glutamate 60, and aspartate 150 each contribute to the Zn(2+) site. NADP(+)-binding positions include alanine 175–valine 178, aspartate 198–arginine 200, valine 265–tyrosine 267, and lysine 340.

The protein belongs to the zinc-containing alcohol dehydrogenase family. Zn(2+) is required as a cofactor.

The catalysed reaction is propan-2-ol + NADP(+) = acetone + NADPH + H(+). In terms of biological role, alcohol dehydrogenase with a preference for medium chain secondary alcohols, such as 2-butanol and isopropanol. Has very low activity with primary alcohols, such as ethanol. Under physiological conditions, the enzyme reduces aldehydes and 2-ketones to produce secondary alcohols. Is also active with acetaldehyde and propionaldehyde. The protein is Probable NADP-dependent isopropanol dehydrogenase (adh) of Mycoplasma pneumoniae (strain ATCC 29342 / M129 / Subtype 1) (Mycoplasmoides pneumoniae).